A 179-amino-acid polypeptide reads, in one-letter code: Cellular nucleic acid-binding protein homolog (179 aa).

CCHC-type zinc fingers lie at residues 17–34 (PRCY…ECTK), 36–53 (SICY…ECTE), 58–75 (KTCY…DCPS), 83–100 (AECY…DCRT), 116–133 (MNCY…DCTM), 135–152 (VKCY…ECQQ), and 157–174 (QLCY…NCTS).

The protein to human CNBP and to retroviral nucleic acid binding proteins (NBP). In terms of processing, phosphorylated.

The protein resides in the nucleus. Its function is as follows. Acts in the sexual differentiation pathway. Is required for efficient conjugation. Double-stranded DNA-binding protein. This Schizosaccharomyces pombe (strain 972 / ATCC 24843) (Fission yeast) protein is Cellular nucleic acid-binding protein homolog (byr3).